The chain runs to 240 residues: UDP-2,3-diacylglucosamine hydrolase (240 aa).

Asp-8, His-10, Asp-41, Asn-79, and His-114 together coordinate Mn(2+). 79-80 (NR) lines the substrate pocket. Positions 122, 160, 164, 167, and 195 each coordinate substrate. Mn(2+) contacts are provided by His-195 and His-197.

It belongs to the LpxH family. Mn(2+) is required as a cofactor.

It localises to the cell inner membrane. The enzyme catalyses UDP-2-N,3-O-bis[(3R)-3-hydroxytetradecanoyl]-alpha-D-glucosamine + H2O = 2-N,3-O-bis[(3R)-3-hydroxytetradecanoyl]-alpha-D-glucosaminyl 1-phosphate + UMP + 2 H(+). Its pathway is glycolipid biosynthesis; lipid IV(A) biosynthesis; lipid IV(A) from (3R)-3-hydroxytetradecanoyl-[acyl-carrier-protein] and UDP-N-acetyl-alpha-D-glucosamine: step 4/6. In terms of biological role, hydrolyzes the pyrophosphate bond of UDP-2,3-diacylglucosamine to yield 2,3-diacylglucosamine 1-phosphate (lipid X) and UMP by catalyzing the attack of water at the alpha-P atom. Involved in the biosynthesis of lipid A, a phosphorylated glycolipid that anchors the lipopolysaccharide to the outer membrane of the cell. In Pseudomonas paraeruginosa (strain DSM 24068 / PA7) (Pseudomonas aeruginosa (strain PA7)), this protein is UDP-2,3-diacylglucosamine hydrolase.